The chain runs to 141 residues: Putative pre-16S rRNA nuclease (141 aa).

This sequence belongs to the YqgF nuclease family.

It localises to the cytoplasm. In terms of biological role, could be a nuclease involved in processing of the 5'-end of pre-16S rRNA. In Shewanella oneidensis (strain ATCC 700550 / JCM 31522 / CIP 106686 / LMG 19005 / NCIMB 14063 / MR-1), this protein is Putative pre-16S rRNA nuclease.